We begin with the raw amino-acid sequence, 122 residues long: MNNSLKKEERVEEDNGKSDGNRGKPSTEVVRTVTEEEVDEFFKILRRVHVATRTVAKVNGGVAEGELPSKKRKRSQNLGLRNSLDCNGVRDGEFDEINRVGLQGLGLDLNCKPEPDSVSLSL.

Over residues 1 to 22 the composition is skewed to basic and acidic residues; sequence MNNSLKKEERVEEDNGKSDGNR. Residues 1 to 28 form a disordered region; it reads MNNSLKKEERVEEDNGKSDGNRGKPSTE. Residues 39–45 are involved in NPR1/NIM1 interaction; sequence DEFFKIL. Residues 70–74 carry the Nuclear localization signal motif; that stretch reads KKRKR.

Interacts with NPR1 N-terminal region.

The protein localises to the nucleus. The protein is Protein NIM1-INTERACTING 2 of Arabidopsis thaliana (Mouse-ear cress).